A 416-amino-acid polypeptide reads, in one-letter code: FBD-associated F-box protein At3g52670 (416 aa).

The F-box domain maps to 9-62 (EDRMNQLPEDLILRILSFLPTELVIATSVLSKQWRSLWKLVPNLEFDSDDYESE). The region spanning 327–378 (KWNEPKYVPECLLSHLETFVWIRYDWEREEEKEVATYILRNARWLKKGTIST) is the FBD domain.

The protein is FBD-associated F-box protein At3g52670 of Arabidopsis thaliana (Mouse-ear cress).